A 435-amino-acid chain; its full sequence is NADH-quinone oxidoreductase subunit D (435 aa).

It belongs to the complex I 49 kDa subunit family. As to quaternary structure, NDH-1 is composed of 14 different subunits. Subunits NuoB, C, D, E, F, and G constitute the peripheral sector of the complex.

Its subcellular location is the cell membrane. The enzyme catalyses a quinone + NADH + 5 H(+)(in) = a quinol + NAD(+) + 4 H(+)(out). NDH-1 shuttles electrons from NADH, via FMN and iron-sulfur (Fe-S) centers, to quinones in the respiratory chain. The immediate electron acceptor for the enzyme in this species is believed to be ubiquinone. Couples the redox reaction to proton translocation (for every two electrons transferred, four hydrogen ions are translocated across the cytoplasmic membrane), and thus conserves the redox energy in a proton gradient. The sequence is that of NADH-quinone oxidoreductase subunit D from Stenotrophomonas maltophilia (strain K279a).